The chain runs to 423 residues: Serine--tRNA ligase (423 aa).

An L-serine-binding site is contributed by 229–231; the sequence is TAE. 258–260 lines the ATP pocket; sequence RRE. Glu-281 contacts L-serine. 345–348 contacts ATP; it reads EISS. Position 379 (Ser-379) interacts with L-serine.

Belongs to the class-II aminoacyl-tRNA synthetase family. Type-1 seryl-tRNA synthetase subfamily. Homodimer. The tRNA molecule binds across the dimer.

The protein resides in the cytoplasm. The catalysed reaction is tRNA(Ser) + L-serine + ATP = L-seryl-tRNA(Ser) + AMP + diphosphate + H(+). The enzyme catalyses tRNA(Sec) + L-serine + ATP = L-seryl-tRNA(Sec) + AMP + diphosphate + H(+). Its pathway is aminoacyl-tRNA biosynthesis; selenocysteinyl-tRNA(Sec) biosynthesis; L-seryl-tRNA(Sec) from L-serine and tRNA(Sec): step 1/1. Its function is as follows. Catalyzes the attachment of serine to tRNA(Ser). Is also able to aminoacylate tRNA(Sec) with serine, to form the misacylated tRNA L-seryl-tRNA(Sec), which will be further converted into selenocysteinyl-tRNA(Sec). The polypeptide is Serine--tRNA ligase (serS1) (Methanosarcina barkeri (strain Fusaro / DSM 804)).